Reading from the N-terminus, the 163-residue chain is Staphylokinase (163 aa).

A signal peptide spans 1–27 (MLKRSLLFLTVLLLLFSFSSITNEVSA).

This sequence belongs to the staphylokinase family.

The protein localises to the secreted. Its function is as follows. Potent plasminogen activator that converts plasminogen into plasmin. It forms a 1:1 complex with plasmin, which in turn activates other plasminogen molecules. This is Staphylokinase (sak) from Staphylococcus aureus (strain MW2).